A 216-amino-acid chain; its full sequence is Ribose-5-phosphate isomerase A (216 aa).

Substrate contacts are provided by residues 26–29 (TGST), 79–82 (DGAD), and 92–95 (KGGG). E101 acts as the Proton acceptor in catalysis. K119 is a binding site for substrate.

The protein belongs to the ribose 5-phosphate isomerase family. In terms of assembly, homodimer.

It catalyses the reaction aldehydo-D-ribose 5-phosphate = D-ribulose 5-phosphate. The protein operates within carbohydrate degradation; pentose phosphate pathway; D-ribose 5-phosphate from D-ribulose 5-phosphate (non-oxidative stage): step 1/1. In terms of biological role, catalyzes the reversible conversion of ribose-5-phosphate to ribulose 5-phosphate. The sequence is that of Ribose-5-phosphate isomerase A from Legionella pneumophila (strain Paris).